Reading from the N-terminus, the 383-residue chain is Creatine kinase, testis isozyme (383 aa).

The 87-residue stretch at 14-100 folds into the Phosphagen kinase N-terminal domain; that stretch reads KRLSPEEEFP…LDPIIEDRHG (87 aa). Basic and acidic residues predominate over residues 99-112; the sequence is HGGYKPTDKHKTDL. Residues 99–119 form a disordered region; that stretch reads HGGYKPTDKHKTDLNPDNLKG. Residues 127-369 enclose the Phosphagen kinase C-terminal domain; that stretch reads YVISSRVRTG…KLLVEMEKKL (243 aa). ATP contacts are provided by residues 130 to 134, His-193, Arg-238, Arg-294, 322 to 327, and Asp-337; these read SSRVR and RGTGGV.

This sequence belongs to the ATP:guanido phosphotransferase family. As to expression, exists in many tissues, but preferentially in testis.

It catalyses the reaction creatine + ATP = N-phosphocreatine + ADP + H(+). Reversibly catalyzes the transfer of phosphate between ATP and various phosphogens (e.g. creatine phosphate). Creatine kinase isoenzymes play a central role in energy transduction in tissues with large, fluctuating energy demands, such as skeletal muscle, heart, brain and spermatozoa. This chain is Creatine kinase, testis isozyme (tck1), found in Oncorhynchus mykiss (Rainbow trout).